The chain runs to 162 residues: Dihydrofolate reductase type 3 (162 aa).

One can recognise a DHFR domain in the interval 2–160 (LISLIAALAH…YACEFVTLSR (159 aa)).

Belongs to the dihydrofolate reductase family. In terms of assembly, monomer.

It catalyses the reaction (6S)-5,6,7,8-tetrahydrofolate + NADP(+) = 7,8-dihydrofolate + NADPH + H(+). It participates in cofactor biosynthesis; tetrahydrofolate biosynthesis; 5,6,7,8-tetrahydrofolate from 7,8-dihydrofolate: step 1/1. Its function is as follows. Key enzyme in folate metabolism. Catalyzes an essential reaction for de novo glycine and purine synthesis, and for DNA precursor synthesis. This Salmonella typhimurium protein is Dihydrofolate reductase type 3 (dhfrIII).